Consider the following 1579-residue polypeptide: DNA-directed RNA polymerase II subunit RPB1 (1579 aa).

Positions 68, 71, 78, 81, 108, 111, 149, and 171 each coordinate Zn(2+). Mg(2+) is bound by residues D485, D487, and D489. Residues 642–654 (PQEFFFHAMAGRE) form a bridging helix region. K1080 participates in a covalent cross-link: Glycyl lysine isopeptide (Lys-Gly) (interchain with G-Cter in ubiquitin). The segment covering 1382–1565 (SPTYSPTSPS…NSPQYSPRSP (184 aa)) has biased composition (low complexity). Positions 1382–1579 (SPTYSPTSPS…DQNDDKDKKQ (198 aa)) are disordered. 16 repeat units span residues 1385-1391 (YSPTSPS), 1392-1398 (YSPTSPS), 1399-1405 (YSPTSPS), 1406-1412 (YSPTSPS), 1413-1419 (YSPTSPS), 1420-1426 (YSPTSPS), 1427-1433 (YSPTSPS), 1434-1440 (YSPTSPS), 1441-1447 (YSPTSPS), 1448-1454 (YSPTSPS), 1455-1461 (YSPTSPS), 1462-1468 (YSPTSPS), 1469-1475 (YSPTSPS), 1476-1482 (YSPTSPS), 1483-1489 (YSPTSPS), and 1490-1496 (YSPTSPS). The C-terminal domain (CTD); 26 X 7 AA approximate tandem repeats of Y-S-P-T-S-P-[S-A-Q] stretch occupies residues 1385-1566 (YSPTSPSYSP…SPQYSPRSPL (182 aa)). The 17; approximate repeat unit spans residues 1497 to 1503 (YSPTSPL). A run of 7 repeats spans residues 1504-1510 (YSPTSPS), 1511-1517 (YSPTSPS), 1518-1524 (YSPTSPS), 1525-1531 (YSPTSPS), 1532-1538 (YSPTSPQ), 1539-1545 (YSPTSPA), and 1546-1552 (YSPTSPQ). One copy of the 25; approximate repeat lies at 1553–1559 (YSPNSPQ). A 26; approximate repeat occupies 1560-1566 (YSPRSPL).

It belongs to the RNA polymerase beta' chain family. Component of the RNA polymerase II (Pol II) complex consisting of 12 subunits. Post-translationally, the tandem 7 residues repeats in the C-terminal domain (CTD) can be highly phosphorylated. The phosphorylation activates Pol II. Phosphorylation occurs mainly at residues 'Ser-2' and 'Ser-5' of the heptapeptide repeat. The phosphorylation state is believed to result from the balanced action of site-specific CTD kinases and phosphatase, and a 'CTD code' that specifies the position of Pol II within the transcription cycle has been proposed. In terms of processing, following transcription stress, the elongating form of RNA polymerase II (RNA pol IIo) is polyubiquitinated via 'Lys-63'-linkages on Lys-1080 at DNA damage sites without leading to degradation: ubiquitination promotes RNA pol IIo backtracking to allow access by the transcription-coupled nucleotide excision repair (TC-NER) machinery. Subsequent DEF1-dependent polyubiquitination by the elongin complex via 'Lys-48'-linkages may lead to proteasome-mediated degradation; presumably at stalled RNA pol II where TC-NER has failed, to halt global transcription and enable 'last resort' DNA repair pathways.

The protein localises to the nucleus. It carries out the reaction RNA(n) + a ribonucleoside 5'-triphosphate = RNA(n+1) + diphosphate. In terms of biological role, DNA-dependent RNA polymerase catalyzes the transcription of DNA into RNA using the four ribonucleoside triphosphates as substrates. Largest and catalytic component of RNA polymerase II which synthesizes mRNA precursors and many functional non-coding RNAs. Forms the polymerase active center together with the second largest subunit. Pol II is the central component of the basal RNA polymerase II transcription machinery. It is composed of mobile elements that move relative to each other. RPB1 is part of the core element with the central large cleft, the clamp element that moves to open and close the cleft and the jaws that are thought to grab the incoming DNA template. At the start of transcription, a single-stranded DNA template strand of the promoter is positioned within the central active site cleft of Pol II. A bridging helix emanates from RPB1 and crosses the cleft near the catalytic site and is thought to promote translocation of Pol II by acting as a ratchet that moves the RNA-DNA hybrid through the active site by switching from straight to bent conformations at each step of nucleotide addition. During transcription elongation, Pol II moves on the template as the transcript elongates. Elongation is influenced by the phosphorylation status of the C-terminal domain (CTD) of Pol II largest subunit (RPB1), which serves as a platform for assembly of factors that regulate transcription initiation, elongation, termination and mRNA processing. The polypeptide is DNA-directed RNA polymerase II subunit RPB1 (RPB1) (Meyerozyma guilliermondii (strain ATCC 6260 / CBS 566 / DSM 6381 / JCM 1539 / NBRC 10279 / NRRL Y-324) (Yeast)).